A 295-amino-acid chain; its full sequence is Tyrosine transport system permease protein (295 aa).

8 helical membrane-spanning segments follow: residues 3–23, 57–77, 81–101, 122–142, 173–193, 200–220, 232–252, and 256–276; these read GIIS…GVYI, VVAT…TGIL, FKIS…SINL, ISPI…LDLF, ILGL…MAQF, NMGI…ITLF, IIVG…LGML, and LKLI…LNIS.

This sequence belongs to the binding-protein-dependent transport system permease family. As to quaternary structure, the complex is probably composed of two ATP-binding proteins (CDR20291_0806), two transmembrane proteins (CDR20291_0807) and a solute-binding protein (CDR20291_0805).

Its subcellular location is the cell membrane. In terms of biological role, probably part of an ABC transporter complex involved in tyrosine uptake. May also import phenylalanine. Probably responsible for the translocation of the substrate across the membrane. In Clostridioides difficile (strain R20291) (Peptoclostridium difficile), this protein is Tyrosine transport system permease protein.